The chain runs to 239 residues: Isoprenyl transferase (239 aa).

The active site involves Asp16. Asp16 contacts Mg(2+). Substrate contacts are provided by residues 17 to 20 (GNGR), Trp21, Arg29, His33, and 61 to 63 (STE). The active-site Proton acceptor is Asn64. Substrate is bound by residues Trp65, Arg67, Arg187, and 193–195 (RLS). A Mg(2+)-binding site is contributed by Glu206.

The protein belongs to the UPP synthase family. Homodimer. Mg(2+) serves as cofactor.

In terms of biological role, catalyzes the condensation of isopentenyl diphosphate (IPP) with allylic pyrophosphates generating different type of terpenoids. In Lactobacillus johnsonii (strain CNCM I-12250 / La1 / NCC 533), this protein is Isoprenyl transferase.